Here is a 234-residue protein sequence, read N- to C-terminus: Tissue factor pathway inhibitor 2 (234 aa).

The N-terminal stretch at 1 to 22 (MDSVRPLWLMLLSLLLVGTALG) is a signal peptide. 3 consecutive BPTI/Kunitz inhibitor domains span residues 36-86 (CLLP…NEAC), 96-146 (CRLK…MDFC), and 155-205 (CYSP…KRTC). 9 disulfides stabilise this stretch: Cys-36–Cys-86, Cys-45–Cys-69, Cys-61–Cys-82, Cys-96–Cys-146, Cys-105–Cys-129, Cys-121–Cys-142, Cys-155–Cys-205, Cys-164–Cys-188, and Cys-180–Cys-201. N-linked (GlcNAc...) asparagine glycosylation is present at Asn-115. N-linked (GlcNAc...) asparagine glycosylation is found at Asn-167 and Asn-184.

In terms of assembly, finds in a complex with ABCB1, TFPI2 and PPP2R3C; leading to the dephosphorylation of ABCB1.

Its subcellular location is the secreted. In terms of biological role, may play a role in the regulation of plasmin-mediated matrix remodeling. Inhibits trypsin, plasmin, factor VIIa/tissue factor and weakly factor Xa. Has no effect on thrombin. The sequence is that of Tissue factor pathway inhibitor 2 (TFPI2) from Bos taurus (Bovine).